A 348-amino-acid polypeptide reads, in one-letter code: Ricin B-like lectin R40C1 (348 aa).

Residues 1-26 form a disordered region; sequence MFGFGHHGHHGQDQPPQHHGGGGGGA. The Ricin B-type lectin domain maps to 199–345; that stretch reads TVRIFCKADE…CEGDNQRWKI (147 aa).

Expressed in roots and shoots.

In terms of biological role, lectin which binds carbohydrates in vitro. Interacts through its lectin domain with glycan structures containing specific motifs. The sequence is that of Ricin B-like lectin R40C1 from Oryza sativa subsp. japonica (Rice).